A 443-amino-acid chain; its full sequence is MTSSTPRNEELFDRARQLMPGGVNSPVRAFGSVGGTPRFMVSAKGPYLMDADGNEYVDLVCSWGPALLGHAHPAVLDAVHAAVDRGLSFGASTPDEANLAEIVMERVPAVERLRMVSTGTEATMTAVRLARGFTGRNLIIKFAGCYHGHLDGLLAAAGSGVATLALPGSAGVTEATAAETLVLPYNDLAAVKEAFATHGSNIAAVITEAAPANMGVVTPGEGFNLGLSRITREHGALLIVDEVLTGFRTGYSGYWGLTGGAPDATDPWTPDLLTFGKVIGGGMPTAALGGRADVMDYLAPTGPVYQAGTLSGNPVAMAAGVATLTHATRDVYSYIDVRSLELSSALSSALDAAGVDHSIQFAGNLFSVAFGTSAHGVHNYADAQGQEAFRYAPFFHSMLESGVYLPPSVFEAWFLSAAHDDAAMNRIFDALPAAAKAAAAAQG.

At Lys-277 the chain carries N6-(pyridoxal phosphate)lysine.

It belongs to the class-III pyridoxal-phosphate-dependent aminotransferase family. HemL subfamily. As to quaternary structure, homodimer. Pyridoxal 5'-phosphate is required as a cofactor.

It localises to the cytoplasm. It carries out the reaction (S)-4-amino-5-oxopentanoate = 5-aminolevulinate. It functions in the pathway porphyrin-containing compound metabolism; protoporphyrin-IX biosynthesis; 5-aminolevulinate from L-glutamyl-tRNA(Glu): step 2/2. This chain is Glutamate-1-semialdehyde 2,1-aminomutase, found in Pseudarthrobacter chlorophenolicus (strain ATCC 700700 / DSM 12829 / CIP 107037 / JCM 12360 / KCTC 9906 / NCIMB 13794 / A6) (Arthrobacter chlorophenolicus).